Here is a 446-residue protein sequence, read N- to C-terminus: Mycosin-1 (446 aa).

The signal sequence occupies residues M1 to A21. Residues P24–T43 are disordered. The Peptidase S8 domain maps to P64–L387. Residues D90, H121, and S332 each act as charge relay system in the active site. Residues I419–A439 traverse the membrane as a helical segment.

This sequence belongs to the peptidase S8 family.

The protein resides in the cell membrane. May play a dual role in regulation of ESX-1 secretion and virulence. Acts as a protease that cleaves EspB. Essential for ESX-1 function, required for early replication in macrophages and full virulence in mice. This is Mycosin-1 from Mycobacterium tuberculosis (strain ATCC 25618 / H37Rv).